The following is a 100-amino-acid chain: MSVEKALKDLVKTGVYAMGFKQSLKAVKAGEAKAIVIAENTPPELRRKLEYYAKLAGIPIIVYRGTRMDMGLVMGRRHGVSVLAVIDEGSSRILEQAEEA.

This sequence belongs to the eukaryotic ribosomal protein eL30 family.

The sequence is that of Large ribosomal subunit protein eL30 (rpl30e) from Aeropyrum pernix (strain ATCC 700893 / DSM 11879 / JCM 9820 / NBRC 100138 / K1).